We begin with the raw amino-acid sequence, 442 residues long: Thymidine phosphorylase (442 aa).

Belongs to the thymidine/pyrimidine-nucleoside phosphorylase family. As to quaternary structure, homodimer.

It carries out the reaction thymidine + phosphate = 2-deoxy-alpha-D-ribose 1-phosphate + thymine. The protein operates within pyrimidine metabolism; dTMP biosynthesis via salvage pathway; dTMP from thymine: step 1/2. The enzymes which catalyze the reversible phosphorolysis of pyrimidine nucleosides are involved in the degradation of these compounds and in their utilization as carbon and energy sources, or in the rescue of pyrimidine bases for nucleotide synthesis. In Vibrio parahaemolyticus serotype O3:K6 (strain RIMD 2210633), this protein is Thymidine phosphorylase.